A 114-amino-acid polypeptide reads, in one-letter code: Flagellar hook-basal body complex protein FliE (114 aa).

Belongs to the FliE family.

Its subcellular location is the bacterial flagellum basal body. This chain is Flagellar hook-basal body complex protein FliE, found in Burkholderia multivorans (strain ATCC 17616 / 249).